Here is a 121-residue protein sequence, read N- to C-terminus: uncharacterized protein (121 aa).

Positions Lys-100 to Ser-121 are disordered.

This is an uncharacterized protein from Mycoplasma pneumoniae (strain ATCC 29342 / M129 / Subtype 1) (Mycoplasmoides pneumoniae).